Consider the following 303-residue polypeptide: D-alanine--D-alanine ligase (303 aa).

The ATP-grasp domain occupies 104–300 (KLMWQAVGLP…FEKLVERVLE (197 aa)). Residue 132-187 (IAKLGLPVFVKPSSEGSSVGVTKVKTVEQLLPAVEEALKFDSIVLVEAFLAGKEYS) coordinates ATP. 3 residues coordinate Mg(2+): Asp-254, Glu-267, and Asn-269.

The protein belongs to the D-alanine--D-alanine ligase family. Requires Mg(2+) as cofactor. Mn(2+) serves as cofactor.

It is found in the cytoplasm. The catalysed reaction is 2 D-alanine + ATP = D-alanyl-D-alanine + ADP + phosphate + H(+). It functions in the pathway cell wall biogenesis; peptidoglycan biosynthesis. Its function is as follows. Cell wall formation. This Actinobacillus pleuropneumoniae serotype 5b (strain L20) protein is D-alanine--D-alanine ligase.